Consider the following 95-residue polypeptide: Protein TusB (95 aa).

It belongs to the DsrH/TusB family. As to quaternary structure, heterohexamer, formed by a dimer of trimers. The hexameric TusBCD complex contains 2 copies each of TusB, TusC and TusD. The TusBCD complex interacts with TusE.

The protein resides in the cytoplasm. In terms of biological role, part of a sulfur-relay system required for 2-thiolation of 5-methylaminomethyl-2-thiouridine (mnm(5)s(2)U) at tRNA wobble positions. The polypeptide is Protein TusB (Pectobacterium atrosepticum (strain SCRI 1043 / ATCC BAA-672) (Erwinia carotovora subsp. atroseptica)).